Consider the following 518-residue polypeptide: Tyrosine/DOPA decarboxylase 1 (518 aa).

K321 carries the N6-(pyridoxal phosphate)lysine modification.

The protein belongs to the group II decarboxylase family. In terms of assembly, homodimer. Requires pyridoxal 5'-phosphate as cofactor. Predominantly expressed in the roots.

It carries out the reaction L-tyrosine + H(+) = tyramine + CO2. The catalysed reaction is L-dopa + H(+) = dopamine + CO2. It catalyses the reaction 5-hydroxy-L-tryptophan + H(+) = serotonin + CO2. Functionally, marginally higher substrate specificity for L-DOPA over L-tyrosine. The polypeptide is Tyrosine/DOPA decarboxylase 1 (TYDC1) (Papaver somniferum (Opium poppy)).